Reading from the N-terminus, the 139-residue chain is 6,7-dimethyl-8-ribityllumazine synthase (139 aa).

5-amino-6-(D-ribitylamino)uracil contacts are provided by residues F11, 42 to 44, and 66 to 68; these read ALE and VVI. 71 to 72 is a (2S)-2-hydroxy-3-oxobutyl phosphate binding site; it reads ET. The active-site Proton donor is the H74. N98 contacts 5-amino-6-(D-ribitylamino)uracil. A (2S)-2-hydroxy-3-oxobutyl phosphate-binding site is contributed by R112.

The protein belongs to the DMRL synthase family.

The catalysed reaction is (2S)-2-hydroxy-3-oxobutyl phosphate + 5-amino-6-(D-ribitylamino)uracil = 6,7-dimethyl-8-(1-D-ribityl)lumazine + phosphate + 2 H2O + H(+). It participates in cofactor biosynthesis; riboflavin biosynthesis; riboflavin from 2-hydroxy-3-oxobutyl phosphate and 5-amino-6-(D-ribitylamino)uracil: step 1/2. Catalyzes the formation of 6,7-dimethyl-8-ribityllumazine by condensation of 5-amino-6-(D-ribitylamino)uracil with 3,4-dihydroxy-2-butanone 4-phosphate. This is the penultimate step in the biosynthesis of riboflavin. The chain is 6,7-dimethyl-8-ribityllumazine synthase from Novosphingobium aromaticivorans (strain ATCC 700278 / DSM 12444 / CCUG 56034 / CIP 105152 / NBRC 16084 / F199).